The sequence spans 132 residues: Small ribosomal subunit protein uS8 (132 aa).

Belongs to the universal ribosomal protein uS8 family. In terms of assembly, part of the 30S ribosomal subunit. Contacts proteins S5 and S12.

Its function is as follows. One of the primary rRNA binding proteins, it binds directly to 16S rRNA central domain where it helps coordinate assembly of the platform of the 30S subunit. In Streptococcus thermophilus (strain CNRZ 1066), this protein is Small ribosomal subunit protein uS8.